We begin with the raw amino-acid sequence, 407 residues long: Ameloblastin (407 aa).

The first 26 residues, 1-26 (MSASKIPLFKMKGLILFLSLVKMSLA), serve as a signal peptide directing secretion. Hydroxyproline is present on P42. Position 48 is a phosphoserine (S48). Disordered regions lie at residues 124 to 143 (GVQV…PGQL) and 259 to 304 (QNSP…ENPA).

This sequence belongs to the ameloblastin family. As to expression, ameloblast-specific.

Its subcellular location is the secreted. It is found in the extracellular space. The protein resides in the extracellular matrix. In terms of biological role, involved in the mineralization and structural organization of enamel. This chain is Ameloblastin (Ambn), found in Mus musculus (Mouse).